Here is a 516-residue protein sequence, read N- to C-terminus: BAR/IMD domain-containing adapter protein 2-like 1 (516 aa).

The IMD domain occupies 1-249 (MSRGPEEVNR…MNMIEEIKTP (249 aa)). Positions 115 to 148 (MNATLKRYQAEHRNKLDSLEKSQAELKKIRRKSQ) form a coiled coil. Thr-248 and Thr-257 each carry phosphothreonine. A phosphoserine mark is found at Ser-261 and Ser-281. The disordered stretch occupies residues 303-328 (NPATAGQSAEKTNNSTANTGDDPSLQ). Residue Ser-332 is modified to Phosphoserine. The region spanning 340-403 (MKKQKVKTIF…PSSYTKLLEE (64 aa)) is the SH3 domain. Thr-413 carries the phosphothreonine modification. A phosphoserine mark is found at Ser-415, Ser-421, and Ser-423. Positions 454 to 516 (ADAAKIPSTS…TNDRSAPIIR (63 aa)) are disordered. A compositionally biased stretch (polar residues) spans 474-485 (ATSTSPSDSNGT). Residues 488–516 (PPFLSGENPFATVKLRPTVTNDRSAPIIR) are binds F-actin.

Interacts with RAC1. Binds to F-actin. Interacts with FASLG. In terms of processing, phosphorylated on tyrosine in response to insulin.

The protein localises to the cytoplasm. It is found in the cytoskeleton. Functionally, may function as adapter protein. Involved in the formation of clusters of actin bundles. Plays a role in the reorganization of the actin cytoskeleton in response to bacterial infection. In Rattus norvegicus (Rat), this protein is BAR/IMD domain-containing adapter protein 2-like 1 (Baiap2l1).